The following is a 333-amino-acid chain: MLGIWTLLPLVLTSVVRLLSKCVNAQVTDISSKGFELRKIVTTIETQNLEGLHHEGQFCRNPCPPGERKARDCTVNEDEPDCVPCQEGEEYTDKGHFSSKCRRCRLCDEGHGLEVEINCTRTQNTKCRCKPNFFCNSAVCEHCDPCTKCKHGIIEECTLTSNTKCKEEDSRSDLLWLCLLLLLLLIPPIVYVVIKEPCRKRRKENQGPHESTTLNPETAINLSDVDLSKYITTIAGAMTLSQVKDFVRKNGVSEAKIDEIKNDNVQDTAEQKVQLLRNWYQLHGKKDACDTLIKGLKTADLCTLAEKIHAVILKDITSDTENSNFGNEVQNLV.

An N-terminal signal peptide occupies residues 1 to 25 (MLGIWTLLPLVLTSVVRLLSKCVNA). Residues 26–173 (QVTDISSKGF…KCKEEDSRSD (148 aa)) are Extracellular-facing. 3 TNFR-Cys repeats span residues 47–83 (QNLE…PDCV), 84–127 (PCQE…NTKC), and 128–166 (RCKP…TKCK). Disulfide bonds link C59-C73, C63-C82, C85-C101, C104-C119, C107-C127, C129-C143, C146-C157, and C149-C165. The N-linked (GlcNAc...) asparagine glycan is linked to N118. Residues 174–194 (LLWLCLLLLLLLIPPIVYVVI) form a helical membrane-spanning segment. The Cytoplasmic segment spans residues 195-333 (KEPCRKRRKE…NFGNEVQNLV (139 aa)). A lipid anchor (S-palmitoyl cysteine) is attached at C198. The interaction with HIPK3 stretch occupies residues 211–315 (STTLNPETAI…EKIHAVILKD (105 aa)). A Phosphothreonine modification is found at T213. The residue at position 223 (S223) is a Phosphoserine. The tract at residues 228 to 252 (SKYITTIAGAMTLSQVKDFVRKNGV) is interaction with CALM. The region spanning 228-312 (SKYITTIAGA…TLAEKIHAVI (85 aa)) is the Death domain. T320 carries the phosphothreonine modification.

As to quaternary structure, component of the death-induced signaling complex (DISC) composed of cell surface receptor FAS/CD95, adapter protein FADD and the CASP8 protease; recruitment of CASP8 to the complex is required for processing of CASP8 into the p18 and p10 subunits. Interacts directly (via DED domain) with NOL3 (via CARD domain); inhibits death-inducing signaling complex (DISC) assembly by inhibiting the increase in FAS-FADD binding induced by FAS activation. Binds DAXX. Interacts with HIPK3. Part of a complex containing HIPK3 and FADD. Binds RIPK1 and FAIM2. Interacts with BABAM2 and FEM1B. Interacts with CALM. In the absence of stimulation, interacts with BIRC2, DDX3X and GSK3B. The interaction with BIRC2 and DDX3X is further enhanced upon receptor stimulation and accompanied by DDX3X and BIRC2 cleavage. Post-translationally, palmitoylated. Palmitoylation by ZDHHC7 prevents the lysosomal degradation of FAS regulating its expression at the plasma membrane.

Its subcellular location is the cell membrane. It localises to the membrane raft. Functionally, receptor for TNFSF6/FASLG. The adapter molecule FADD recruits caspase CASP8 to the activated receptor. The resulting death-inducing signaling complex (DISC) performs CASP8 proteolytic activation which initiates the subsequent cascade of caspases (aspartate-specific cysteine proteases) mediating apoptosis. FAS-mediated apoptosis may have a role in the induction of peripheral tolerance, in the antigen-stimulated suicide of mature T-cells, or both. The sequence is that of Tumor necrosis factor receptor superfamily member 6 (FAS) from Macaca mulatta (Rhesus macaque).